The chain runs to 392 residues: Heavy metal-associated isoprenylated plant protein 6 (392 aa).

Positions Met-1 to Thr-19 are enriched in basic and acidic residues. The segment at Met-1–Gly-22 is disordered. Residues Ile-23 to Val-86 form the HMA 1 domain. 2 residues coordinate Cd(2+): Cys-34 and Cys-37. The interval Val-89 to Val-157 is disordered. A compositionally biased stretch (basic and acidic residues) spans Ala-106–Ala-145. The 64-residue stretch at Glu-153 to Val-216 folds into the HMA 2 domain. Cd(2+) contacts are provided by Cys-164 and Cys-167. Residues Lys-258 to Val-270 show a composition bias toward basic and acidic residues. Disordered stretches follow at residues Lys-258 to Gly-285 and Gly-350 to Met-392. Over residues Val-272 to Gly-285 the composition is skewed to gly residues. Residue Cys-389 is modified to Cysteine methyl ester. Residue Cys-389 is the site of S-farnesyl cysteine attachment. Residues Ser-390–Met-392 constitute a propeptide, removed in mature form.

The protein belongs to the HIPP family. Expressed in petioles, hypocotyls, peduncles, vascular bundles and root meristems.

It localises to the cell membrane. In terms of biological role, heavy-metal-binding protein. Involved in the maintenance of heavy metal homeostasis and/or in detoxification. This chain is Heavy metal-associated isoprenylated plant protein 6, found in Arabidopsis thaliana (Mouse-ear cress).